The chain runs to 97 residues: UPF0147 protein MA_0092 (97 aa).

The protein belongs to the UPF0147 family.

The protein is UPF0147 protein MA_0092 of Methanosarcina acetivorans (strain ATCC 35395 / DSM 2834 / JCM 12185 / C2A).